We begin with the raw amino-acid sequence, 451 residues long: Signal transduction histidine-protein kinase ArlS (451 aa).

Helical transmembrane passes span 11–31 (IIVTTMITFVTIFLFCLIIIF) and 156–176 (IIALAFGVIATIITATISYVF). An HAMP domain is found at 178-231 (TQITKPLVSLSNKMIEIRRDGFQNKLQLNTNYEEIDNLANTFNEMMSQIEESFN). The Histidine kinase domain occupies 239-451 (DASHELRTPL…NKGTTFKIIF (213 aa)). His242 is modified (phosphohistidine; by autocatalysis).

Autophosphorylated.

The protein resides in the cell membrane. It carries out the reaction ATP + protein L-histidine = ADP + protein N-phospho-L-histidine.. Its function is as follows. Member of the two-component regulatory system ArlS/ArlR involved in the regulation of adhesion, autolysis, multidrug resistance and virulence. ArlS probably functions as a sensor protein kinase which is autophosphorylated at a histidine residue and transfers its phosphate group to ArlR. This Staphylococcus aureus (strain MRSA252) protein is Signal transduction histidine-protein kinase ArlS (arlS).